The following is a 212-amino-acid chain: uncharacterized protein (212 aa).

The helical transmembrane segment at 186–206 threads the bilayer; the sequence is VITLISFMLFSILFFLIFLIV.

The protein localises to the membrane. This is an uncharacterized protein from Mycoplasma genitalium (strain ATCC 33530 / DSM 19775 / NCTC 10195 / G37) (Mycoplasmoides genitalium).